We begin with the raw amino-acid sequence, 186 residues long: ATP synthase subunit delta (186 aa).

It belongs to the ATPase delta chain family. F-type ATPases have 2 components, F(1) - the catalytic core - and F(0) - the membrane proton channel. F(1) has five subunits: alpha(3), beta(3), gamma(1), delta(1), epsilon(1). F(0) has three main subunits: a(1), b(2) and c(10-14). The alpha and beta chains form an alternating ring which encloses part of the gamma chain. F(1) is attached to F(0) by a central stalk formed by the gamma and epsilon chains, while a peripheral stalk is formed by the delta and b chains.

The protein localises to the cell inner membrane. Its function is as follows. F(1)F(0) ATP synthase produces ATP from ADP in the presence of a proton or sodium gradient. F-type ATPases consist of two structural domains, F(1) containing the extramembraneous catalytic core and F(0) containing the membrane proton channel, linked together by a central stalk and a peripheral stalk. During catalysis, ATP synthesis in the catalytic domain of F(1) is coupled via a rotary mechanism of the central stalk subunits to proton translocation. Functionally, this protein is part of the stalk that links CF(0) to CF(1). It either transmits conformational changes from CF(0) to CF(1) or is implicated in proton conduction. This is ATP synthase subunit delta from Bacteroides thetaiotaomicron (strain ATCC 29148 / DSM 2079 / JCM 5827 / CCUG 10774 / NCTC 10582 / VPI-5482 / E50).